The primary structure comprises 183 residues: Streptavidin-V2 (183 aa).

The first 24 residues, Met-1–Ala-24, serve as a signal peptide directing secretion. The 123-residue stretch at Ala-37–Pro-159 folds into the Avidin-like domain. Tyr-67 and Tyr-78 together coordinate biotin. A Cell attachment site; atypical motif is present at residues Arg-83–Asp-85. The biotin site is built by Trp-116, Trp-132, and Trp-144.

Belongs to the avidin/streptavidin family. Homotetramer.

It is found in the secreted. The biological function of streptavidin is not known. Forms a strong non-covalent specific complex with biotin (one molecule of biotin per subunit of streptavidin). This chain is Streptavidin-V2, found in Streptomyces violaceus (Streptomyces venezuelae).